The following is a 354-amino-acid chain: Isopentenyl-diphosphate delta-isomerase (354 aa).

Residue 11 to 12 participates in substrate binding; that stretch reads KK. FMN is bound by residues Ser-67, 68-70, Ser-98, and Asn-126; that span reads SMT. 98–100 is a binding site for substrate; that stretch reads SFK. Substrate is bound at residue Gln-160. Residue Glu-161 coordinates Mg(2+). FMN is bound by residues Lys-192, Thr-222, and 289 to 290; that span reads AA.

This sequence belongs to the IPP isomerase type 2 family. In terms of assembly, homooctamer. Dimer of tetramers. The cofactor is FMN. It depends on NADPH as a cofactor. Mg(2+) is required as a cofactor.

It localises to the cytoplasm. It catalyses the reaction isopentenyl diphosphate = dimethylallyl diphosphate. Involved in the biosynthesis of isoprenoids. Catalyzes the 1,3-allylic rearrangement of the homoallylic substrate isopentenyl (IPP) to its allylic isomer, dimethylallyl diphosphate (DMAPP). This chain is Isopentenyl-diphosphate delta-isomerase, found in Borreliella afzelii (strain PKo) (Borrelia afzelii).